A 279-amino-acid chain; its full sequence is MATH domain and coiled-coil domain-containing protein At1g31390 (279 aa).

An MATH domain is found at 6 to 134 (EKKITWTIKN…NGDVKIVVEV (129 aa)). The stretch at 235–271 (KLDWLEKKLKEVCEARVQEIDEEWKDLTDLKENWSSD) forms a coiled coil.

This Arabidopsis thaliana (Mouse-ear cress) protein is MATH domain and coiled-coil domain-containing protein At1g31390.